A 514-amino-acid chain; its full sequence is ATP synthase subunit alpha (514 aa).

Glycine 170–threonine 177 contributes to the ATP binding site.

It belongs to the ATPase alpha/beta chains family. F-type ATPases have 2 components, CF(1) - the catalytic core - and CF(0) - the membrane proton channel. CF(1) has five subunits: alpha(3), beta(3), gamma(1), delta(1), epsilon(1). CF(0) has three main subunits: a(1), b(2) and c(9-12). The alpha and beta chains form an alternating ring which encloses part of the gamma chain. CF(1) is attached to CF(0) by a central stalk formed by the gamma and epsilon chains, while a peripheral stalk is formed by the delta and b chains.

The protein resides in the cell inner membrane. It carries out the reaction ATP + H2O + 4 H(+)(in) = ADP + phosphate + 5 H(+)(out). In terms of biological role, produces ATP from ADP in the presence of a proton gradient across the membrane. The alpha chain is a regulatory subunit. The protein is ATP synthase subunit alpha of Ectopseudomonas mendocina (strain ymp) (Pseudomonas mendocina).